Reading from the N-terminus, the 259-residue chain is Succinate dehydrogenase iron-sulfur subunit (259 aa).

One can recognise a 2Fe-2S ferredoxin-type domain in the interval 28–119 (RRFNIYRWDP…DVNIYPLPHM (92 aa)). [2Fe-2S] cluster contacts are provided by cysteine 80, cysteine 85, and cysteine 100. The region spanning 160–190 (DRKKLDGLYECVMCASCSTACPSYWWNGDRY) is the 4Fe-4S ferredoxin-type domain. 3 residues coordinate [4Fe-4S] cluster: cysteine 170, cysteine 173, and cysteine 176. Residue cysteine 180 coordinates [3Fe-4S] cluster. Tryptophan 185 contributes to the a ubiquinone binding site. Positions 227 and 233 each coordinate [3Fe-4S] cluster. Cysteine 237 serves as a coordination point for [4Fe-4S] cluster.

It belongs to the succinate dehydrogenase/fumarate reductase iron-sulfur protein family. Part of an enzyme complex containing four subunits: a flavoprotein, an iron-sulfur, cytochrome b-556, and a hydrophobic anchor protein. [2Fe-2S] cluster serves as cofactor. [3Fe-4S] cluster is required as a cofactor. The cofactor is [4Fe-4S] cluster.

It catalyses the reaction a quinone + succinate = fumarate + a quinol. Its pathway is carbohydrate metabolism; tricarboxylic acid cycle; fumarate from succinate (bacterial route): step 1/1. The polypeptide is Succinate dehydrogenase iron-sulfur subunit (sdhB) (Paracoccus denitrificans).